The sequence spans 168 residues: G/U mismatch-specific DNA glycosylase (168 aa).

Belongs to the uracil-DNA glycosylase (UDG) superfamily. TDG/mug family. Binds DNA as a monomer.

It localises to the cytoplasm. The enzyme catalyses Specifically hydrolyzes mismatched double-stranded DNA and polynucleotides, releasing free uracil.. Functionally, excises ethenocytosine and uracil, which can arise by alkylation or deamination of cytosine, respectively, from the corresponding mispairs with guanine in ds-DNA. It is capable of hydrolyzing the carbon-nitrogen bond between the sugar-phosphate backbone of the DNA and the mispaired base. The complementary strand guanine functions in substrate recognition. Required for DNA damage lesion repair in stationary-phase cells. In Escherichia coli (strain UTI89 / UPEC), this protein is G/U mismatch-specific DNA glycosylase.